The sequence spans 61 residues: Metallothionein-2B (61 aa).

Met-1 carries the N-acetylmethionine modification. The tract at residues 1 to 29 is beta; it reads MDPNCSCAAGGSCTCAGSCKCKDCRCTSC. A divalent metal cation contacts are provided by Cys-5, Cys-7, Cys-13, Cys-15, Cys-19, Cys-21, Cys-24, Cys-26, Cys-29, Cys-33, Cys-34, Cys-36, Cys-37, Cys-41, Cys-44, Cys-48, Cys-50, Cys-57, Cys-59, and Cys-60. An alpha region spans residues 30–61; sequence KKSCCSCCPAGCARCAQGCICKGASDKCSCCA.

The protein belongs to the metallothionein superfamily. Type 1 family. In terms of assembly, monomer.

Its function is as follows. Metallothioneins have a high content of cysteine residues that bind various heavy metals; these proteins are transcriptionally regulated by both heavy metals and glucocorticoids. The sequence is that of Metallothionein-2B (MT2B) from Sus scrofa (Pig).